A 196-amino-acid polypeptide reads, in one-letter code: Pyridoxal 5'-phosphate synthase subunit PdxT (196 aa).

An L-glutamine-binding site is contributed by 47 to 49; the sequence is GES. Residue Cys79 is the Nucleophile of the active site. L-glutamine is bound by residues Arg106 and 134 to 135; that span reads IR. Catalysis depends on charge relay system residues His170 and Glu172.

This sequence belongs to the glutaminase PdxT/SNO family. In terms of assembly, in the presence of PdxS, forms a dodecamer of heterodimers. Only shows activity in the heterodimer.

The enzyme catalyses aldehydo-D-ribose 5-phosphate + D-glyceraldehyde 3-phosphate + L-glutamine = pyridoxal 5'-phosphate + L-glutamate + phosphate + 3 H2O + H(+). The catalysed reaction is L-glutamine + H2O = L-glutamate + NH4(+). The protein operates within cofactor biosynthesis; pyridoxal 5'-phosphate biosynthesis. Its function is as follows. Catalyzes the hydrolysis of glutamine to glutamate and ammonia as part of the biosynthesis of pyridoxal 5'-phosphate. The resulting ammonia molecule is channeled to the active site of PdxS. This chain is Pyridoxal 5'-phosphate synthase subunit PdxT, found in Bacillus thuringiensis subsp. konkukian (strain 97-27).